Consider the following 84-residue polypeptide: Gomesin-like peptide (84 aa).

The N-terminal stretch at 1–23 (MNRTRALVCLFLAVLILAHESEA) is a signal peptide. Gln24 is subject to Pyrrolidone carboxylic acid. 2 cysteine pairs are disulfide-bonded: Cys25–Cys38 and Cys29–Cys34. At Arg41 the chain carries Arginine amide. Residues 42–84 (GKRSVEEPSGGAQVVEKRAVDDADIPSAVEERELDEEESIEFR) constitute a propeptide that is removed on maturation.

In terms of tissue distribution, expressed by the venom gland.

The protein resides in the secreted. Antibacterial peptide. The protein is Gomesin-like peptide of Hadronyche infensa (Fraser island funnel-web spider).